A 154-amino-acid chain; its full sequence is Putative esterase AF_2264 (154 aa).

This sequence belongs to the thioesterase PaaI family.

This chain is Putative esterase AF_2264, found in Archaeoglobus fulgidus (strain ATCC 49558 / DSM 4304 / JCM 9628 / NBRC 100126 / VC-16).